Here is a 114-residue protein sequence, read N- to C-terminus: MLFEVFGEVLASYIVSSKTKGELAFPVNNAPPDSLVAINCVVLFLRSAIGSCSGAKELIRSSALELSCSSSCGLPATDKPGSFHSGALSKSILSANEAVVSKSSLSFLSSFVDI.

The protein resides in the vacuole membrane. Functionally, required for vacuolar fusion. Involved in the early steps of the fusion pathway. The chain is Vacuolar morphogenesis protein 10 (VAM10) from Saccharomyces cerevisiae (strain ATCC 204508 / S288c) (Baker's yeast).